Reading from the N-terminus, the 112-residue chain is Probable fatty acid-binding protein (112 aa).

Belongs to the calycin superfamily. Fatty-acid binding protein (FABP) family.

This is Probable fatty acid-binding protein from Anopheles gambiae (African malaria mosquito).